Reading from the N-terminus, the 321-residue chain is Ubiquinone biosynthesis protein COQ4, mitochondrial (321 aa).

Zn(2+) is bound by residues H205, D206, H209, and E221.

This sequence belongs to the COQ4 family. In terms of assembly, component of a multi-subunit COQ enzyme complex, composed of at least COQ3, COQ4, COQ5, COQ6, COQ7 and COQ9. Zn(2+) serves as cofactor.

It is found in the mitochondrion inner membrane. The enzyme catalyses a 4-hydroxy-3-methoxy-5-(all-trans-polyprenyl)benzoate + H(+) = a 2-methoxy-6-(all-trans-polyprenyl)phenol + CO2. The protein operates within cofactor biosynthesis; ubiquinone biosynthesis. Functionally, lyase that catalyzes the C1-decarboxylation of 4-hydroxy-3-methoxy-5-(all-trans-polyprenyl)benzoic acid into 2-methoxy-6-(all-trans-polyprenyl)phenol during ubiquinone biosynthesis. This is Ubiquinone biosynthesis protein COQ4, mitochondrial from Candida tropicalis (strain ATCC MYA-3404 / T1) (Yeast).